Consider the following 92-residue polypeptide: Small ribosomal subunit protein uS19 (92 aa).

It belongs to the universal ribosomal protein uS19 family.

In terms of biological role, protein S19 forms a complex with S13 that binds strongly to the 16S ribosomal RNA. The chain is Small ribosomal subunit protein uS19 from Borrelia duttonii (strain Ly).